Here is a 153-residue protein sequence, read N- to C-terminus: Endoribonuclease YbeY (153 aa).

Residues histidine 116, histidine 120, and histidine 126 each contribute to the Zn(2+) site.

This sequence belongs to the endoribonuclease YbeY family. It depends on Zn(2+) as a cofactor.

Its subcellular location is the cytoplasm. Functionally, single strand-specific metallo-endoribonuclease involved in late-stage 70S ribosome quality control and in maturation of the 3' terminus of the 16S rRNA. The chain is Endoribonuclease YbeY from Paraburkholderia phymatum (strain DSM 17167 / CIP 108236 / LMG 21445 / STM815) (Burkholderia phymatum).